A 264-amino-acid chain; its full sequence is Glutamate racemase (264 aa).

Substrate-binding positions include 10-11 (DS) and 42-43 (YG). C73 (proton donor/acceptor) is an active-site residue. 74 to 75 (NT) contacts substrate. Catalysis depends on C183, which acts as the Proton donor/acceptor. Substrate is bound at residue 184–185 (TH).

Belongs to the aspartate/glutamate racemases family.

The catalysed reaction is L-glutamate = D-glutamate. It participates in cell wall biogenesis; peptidoglycan biosynthesis. In terms of biological role, provides the (R)-glutamate required for cell wall biosynthesis. This is Glutamate racemase from Streptococcus pyogenes serotype M49 (strain NZ131).